The sequence spans 1417 residues: DExH-box ATP-dependent RNA helicase DExH4, chloroplastic (1417 aa).

Positions 1–12 (MAPTKKPQKNKQ) are enriched in basic residues. The disordered stretch occupies residues 1–37 (MAPTKKPQKNKQSKNEIASSLIPNSGHKKPSKAPKLL). The N-terminal 61 residues, 1–61 (MAPTKKPQKN…NFRRTPSPVT (61 aa)), are a transit peptide targeting the chloroplast. The Helicase ATP-binding domain occupies 607-781 (LQKLKEKDVL…FGQCPIITAQ (175 aa)). 620-627 (GETGSGKT) is a binding site for ATP. A DEIH box motif is present at residues 722 to 725 (DEVH). A Helicase C-terminal domain is found at 868–1043 (LLEELICHID…ELCLHIKLLG (176 aa)).

Belongs to the DExH box helicase family.

It is found in the plastid. Its subcellular location is the chloroplast. The enzyme catalyses ATP + H2O = ADP + phosphate + H(+). In Arabidopsis thaliana (Mouse-ear cress), this protein is DExH-box ATP-dependent RNA helicase DExH4, chloroplastic.